A 266-amino-acid chain; its full sequence is GTP cyclohydrolase III (266 aa).

It belongs to the archaeal-type GTP cyclohydrolase family.

The catalysed reaction is GTP + 3 H2O = 2-amino-5-formylamino-6-(5-phospho-D-ribosylamino)pyrimidin-4(3H)-one + 2 phosphate + 2 H(+). In terms of biological role, catalyzes the formation of 2-amino-5-formylamino-6-ribofuranosylamino-4(3H)-pyrimidinone ribonucleotide monophosphate and inorganic phosphate from GTP. Also has an independent pyrophosphate phosphohydrolase activity. In Methanococcus maripaludis (strain DSM 14266 / JCM 13030 / NBRC 101832 / S2 / LL), this protein is GTP cyclohydrolase III.